We begin with the raw amino-acid sequence, 103 residues long: Co-chaperonin GroES (103 aa).

This sequence belongs to the GroES chaperonin family. In terms of assembly, heptamer of 7 subunits arranged in a ring. Interacts with the chaperonin GroEL.

Its subcellular location is the cytoplasm. Together with the chaperonin GroEL, plays an essential role in assisting protein folding. The GroEL-GroES system forms a nano-cage that allows encapsulation of the non-native substrate proteins and provides a physical environment optimized to promote and accelerate protein folding. GroES binds to the apical surface of the GroEL ring, thereby capping the opening of the GroEL channel. In Synechococcus sp. (strain JA-3-3Ab) (Cyanobacteria bacterium Yellowstone A-Prime), this protein is Co-chaperonin GroES.